We begin with the raw amino-acid sequence, 549 residues long: Undecaprenyl phosphate-alpha-4-amino-4-deoxy-L-arabinose arabinosyl transferase (549 aa).

A run of 12 helical transmembrane segments spans residues 9–29 (LLLI…GLWI), 80–100 (LFGV…LAYL), 112–132 (SLAC…SGYA), 136–156 (PQFT…LDAG), 166–186 (ILLG…AWLL), 204–224 (LLGY…PWAL), 256–276 (PWWF…GLLP), 288–308 (QAPV…FSLS), 312–332 (LPTY…HALV), 346–366 (NGLL…YLQL), 376–396 (FELF…LAQW), and 402–422 (AWAA…AAMP).

It belongs to the glycosyltransferase 83 family.

The protein resides in the cell inner membrane. The enzyme catalyses 4-amino-4-deoxy-alpha-L-arabinopyranosyl di-trans,octa-cis-undecaprenyl phosphate + lipid IVA = lipid IIA + di-trans,octa-cis-undecaprenyl phosphate.. The protein operates within lipopolysaccharide metabolism; 4-amino-4-deoxy-beta-L-arabinose-lipid A biosynthesis. Functionally, catalyzes the transfer of the L-Ara4N moiety of the glycolipid undecaprenyl phosphate-alpha-L-Ara4N to lipid A. The modified arabinose is attached to lipid A and is required for resistance to polymyxin and cationic antimicrobial peptides. The protein is Undecaprenyl phosphate-alpha-4-amino-4-deoxy-L-arabinose arabinosyl transferase of Pseudomonas aeruginosa (strain UCBPP-PA14).